A 379-amino-acid polypeptide reads, in one-letter code: Probable pectin lyase A (379 aa).

The N-terminal stretch at 1-20 is a signal peptide; the sequence is MKYSTIFSAAAAVFAGSAAA. 2 disulfides stabilise this stretch: Cys83-Cys102 and Cys92-Cys226. Asn129 carries N-linked (GlcNAc...) asparagine glycosylation. Residue Arg256 is part of the active site. Cys322 and Cys330 are disulfide-bonded.

The protein belongs to the polysaccharide lyase 1 family.

Its subcellular location is the secreted. The catalysed reaction is Eliminative cleavage of (1-&gt;4)-alpha-D-galacturonan methyl ester to give oligosaccharides with 4-deoxy-6-O-methyl-alpha-D-galact-4-enuronosyl groups at their non-reducing ends.. Functionally, pectinolytic enzymes consist of four classes of enzymes: pectin lyase, polygalacturonase, pectin methylesterase and rhamnogalacturonase. Among pectinolytic enzymes, pectin lyase is the most important in depolymerization of pectin, since it cleaves internal glycosidic bonds of highly methylated pectins. The protein is Probable pectin lyase A (pelA) of Aspergillus niger (strain ATCC MYA-4892 / CBS 513.88 / FGSC A1513).